Here is a 495-residue protein sequence, read N- to C-terminus: Zinc finger and SCAN domain-containing protein 5B (495 aa).

Residues 1–40 (MAANWTLSWGQGGPCNSPGSDTPRSVASPETQLGNHDRNP) form a disordered region. Over residues 17–34 (SPGSDTPRSVASPETQLG) the composition is skewed to polar residues. Residues 44-126 (HMNFRMFSCP…DLLRNNRRPK (83 aa)) enclose the SCAN box domain. Disordered regions lie at residues 150–183 (APAS…RREQ) and 227–347 (ENRE…PDGQ). Polar residues predominate over residues 161–173 (VSSQWASSVNQMH). The span at 250-262 (RAKEGKEPQKRAS) shows a compositional bias: basic and acidic residues. Positions 292–310 (NLSSPKRSKPDASSISQEE) are enriched in polar residues. 5 consecutive C2H2-type zinc fingers follow at residues 355–377 (FACD…RRSH), 383–405 (FQCD…QRVH), 411–433 (YMCD…KRIH), 439–461 (FKCK…QRTH), and 467–489 (YKCP…LKTH).

It localises to the nucleus. May be involved in transcriptional regulation. The chain is Zinc finger and SCAN domain-containing protein 5B (ZSCAN5B) from Homo sapiens (Human).